A 323-amino-acid chain; its full sequence is Elongation factor P--(R)-beta-lysine ligase (323 aa).

74 to 76 is a binding site for substrate; it reads SPE. Residues 98–100 and N107 contribute to the ATP site; that span reads RNE. A substrate-binding site is contributed by Y116. An ATP-binding site is contributed by 242-243; it reads EL. E249 contacts substrate. G298 serves as a coordination point for ATP.

The protein belongs to the class-II aminoacyl-tRNA synthetase family. EpmA subfamily. Homodimer.

The catalysed reaction is D-beta-lysine + L-lysyl-[protein] + ATP = N(6)-((3R)-3,6-diaminohexanoyl)-L-lysyl-[protein] + AMP + diphosphate + H(+). Its function is as follows. With EpmB is involved in the beta-lysylation step of the post-translational modification of translation elongation factor P (EF-P). Catalyzes the ATP-dependent activation of (R)-beta-lysine produced by EpmB, forming a lysyl-adenylate, from which the beta-lysyl moiety is then transferred to the epsilon-amino group of a conserved specific lysine residue in EF-P. This Vibrio vulnificus (strain YJ016) protein is Elongation factor P--(R)-beta-lysine ligase.